A 223-amino-acid chain; its full sequence is Putative 3-methyladenine DNA glycosylase (223 aa).

Belongs to the DNA glycosylase MPG family.

The polypeptide is Putative 3-methyladenine DNA glycosylase (Pseudomonas savastanoi pv. phaseolicola (strain 1448A / Race 6) (Pseudomonas syringae pv. phaseolicola (strain 1448A / Race 6))).